Here is a 333-residue protein sequence, read N- to C-terminus: Anthranilate phosphoribosyltransferase (333 aa).

5-phospho-alpha-D-ribose 1-diphosphate contacts are provided by residues glycine 81, 84 to 85, threonine 89, 91 to 94, 109 to 117, and alanine 121; these read GD, NIST, and KHGNRSVSS. Glycine 81 is a binding site for anthranilate. Residue serine 93 participates in Mg(2+) binding. Anthranilate is bound at residue asparagine 112. Anthranilate is bound at residue arginine 167. Aspartate 225 and glutamate 226 together coordinate Mg(2+).

The protein belongs to the anthranilate phosphoribosyltransferase family. In terms of assembly, homodimer. It depends on Mg(2+) as a cofactor.

The catalysed reaction is N-(5-phospho-beta-D-ribosyl)anthranilate + diphosphate = 5-phospho-alpha-D-ribose 1-diphosphate + anthranilate. It participates in amino-acid biosynthesis; L-tryptophan biosynthesis; L-tryptophan from chorismate: step 2/5. In terms of biological role, catalyzes the transfer of the phosphoribosyl group of 5-phosphorylribose-1-pyrophosphate (PRPP) to anthranilate to yield N-(5'-phosphoribosyl)-anthranilate (PRA). The protein is Anthranilate phosphoribosyltransferase of Pasteurella multocida (strain Pm70).